Consider the following 347-residue polypeptide: Protein YIPF3 (347 aa).

Positions 1–31 are disordered; sequence MATPAAPASGVRNGAGPEWGGFEENIQGGGS. Ala2 carries the post-translational modification N-acetylalanine; in Protein YIPF3, N-terminally processed. The Cytoplasmic segment spans residues 2–145; the sequence is ATPAAPASGV…PIKMVNFPQK (144 aa). A helical transmembrane segment spans residues 146 to 166; that stretch reads VAGELYGPLMLVFTLVAILLH. The Lumenal segment spans residues 167 to 184; it reads GMKTSDTIIREGTLMGTA. A helical membrane pass occupies residues 185 to 205; the sequence is IGTCFGYWLGVSSFIYFLAYL. Topologically, residues 206 to 211 are cytoplasmic; the sequence is CNAQIT. Residues 212–234 form a helical membrane-spanning segment; the sequence is MLQMLALLGYGLFGHCIVLFITY. Over 235–237 the chain is Lumenal; it reads NIH. A helical membrane pass occupies residues 238-260; the sequence is LHALFYLFWLLVGGLSTLRMVAV. Residues 261–271 lie on the Cytoplasmic side of the membrane; that stretch reads LVSRTVGPTQR. The helical transmembrane segment at 272-292 threads the bilayer; that stretch reads LLLCGTLAALHMLFLLYLHFA. Over 293–347 the chain is Lumenal; that stretch reads YHKVVEGILDTLEGPNIPPMQRVPRDIPAVLPAARLPVAVINATAKAIAVTLQSH. Asn334 is a glycosylation site (N-linked (GlcNAc...) asparagine).

This sequence belongs to the YIP1 family. Interacts with YIPF4 and YIPF5. Expressed by splenocytes (at protein level).

It is found in the cell membrane. The protein resides in the golgi apparatus. It localises to the cis-Golgi network membrane. Its subcellular location is the cytoplasm. In terms of biological role, involved in the maintenance of the Golgi structure. May play a role in hematopoiesis. This is Protein YIPF3 (Yipf3) from Mus musculus (Mouse).